The sequence spans 148 residues: Protein E6 (148 aa).

2 zinc fingers span residues 31 to 67 (CVYCERQLYRCEVYDFIFRDLCVVYRKGKPLGVCQPC) and 104 to 140 (CGKCQKPLCPLEKQRHVDENKRFHQIADQWTGRCTQC). Positions 146 to 148 (TVV) match the PDZ-binding domain motif.

This sequence belongs to the papillomaviridae E6 protein family. Forms homodimers. Interacts with ubiquitin-protein ligase UBE3A/E6-AP and thus forms a complex with human TP53. Interacts with human NFX1 and MAGI3. Interacts with human IRF3; this interaction inhibits the establishment of antiviral state. Interacts with human TYK2; this interaction inhibits JAK-STAT activation by interferon alpha. Interacts with host DLG1; this interaction leads to the proteasomal degradation of DLG1.

The protein localises to the host cytoplasm. It localises to the host nucleus. Functionally, plays a major role in the induction and maintenance of cellular transformation. Acts mainly as an oncoprotein by stimulating the destruction of many host cell key regulatory proteins. E6 associates with host UBE3A/E6-AP ubiquitin-protein ligase, and inactivates tumor suppressors TP53 and TP73 by targeting them to the 26S proteasome for degradation. In turn, DNA damage and chromosomal instabilities increase and lead to cell proliferation and cancer development. The complex E6/E6AP targets several other substrates to degradation via the proteasome including host DLG1 or NFX1, a repressor of human telomerase reverse transcriptase (hTERT). The resulting increased expression of hTERT prevents the shortening of telomere length leading to cell immortalization. Other cellular targets including BAK1, Fas-associated death domain-containing protein (FADD) and procaspase 8, are degraded by E6/E6AP causing inhibition of apoptosis. E6 also inhibits immune response by interacting with host IRF3 and TYK2. These interactions prevent IRF3 transcriptional activities and inhibit TYK2-mediated JAK-STAT activation by interferon alpha resulting in inhibition of the interferon signaling pathway. In Homo sapiens (Human), this protein is Protein E6.